The sequence spans 701 residues: ER-retained PMA1-suppressing protein 1 (701 aa).

The N-terminal stretch at 1–27 (MKMNLKRLVVTFFSCITFLLKFTIAAA) is a signal peptide. Positions 28–142 (EPPEGFPEPL…LIAFARRESM (115 aa)) constitute a Thioredoxin 1 domain. A disulfide bond links C60 and C63. N85 carries N-linked (GlcNAc...) asparagine glycosylation. A disulfide bridge links C200 with C203. N-linked (GlcNAc...) asparagine glycans are attached at residues N264, N299, and N370. One can recognise a Thioredoxin 2 domain in the interval 408–446 (PTFFMFKDGDPISYVFPGYSTTEMRNIDAIMDWVKKYSN). The helical transmembrane segment at 646–666 (IIHGNGMPGYLIVIVLFIAIL) threads the bilayer.

This sequence belongs to the protein disulfide isomerase family. Interacts with mutated PMA1-D378N but not wild type PMA1. Interacts with EUG1, KAR2, MPD1 and PDI1.

It localises to the endoplasmic reticulum membrane. The catalysed reaction is Catalyzes the rearrangement of -S-S- bonds in proteins.. Functionally, acts as a membrane-bound chaperone in endoplasmic reticulum quality control. Probably facilitates presentation of substrate to membrane-bound components of the degradation machinery. The sequence is that of ER-retained PMA1-suppressing protein 1 (EPS1) from Saccharomyces cerevisiae (strain ATCC 204508 / S288c) (Baker's yeast).